The following is an 801-amino-acid chain: Phenylalanine--tRNA ligase beta subunit (801 aa).

In terms of domain architecture, tRNA-binding spans 39-153 (AAGLSKIVVG…EDAVPGEEVF (115 aa)). Positions 406-481 (TSDVEVSSTL…RIYGYDRLPT (76 aa)) constitute a B5 domain. Mg(2+) contacts are provided by Asp459, Asp465, Glu468, and Glu469. Positions 708–801 (TKFPAVSRDV…LEEKVNAEVR (94 aa)) constitute an FDX-ACB domain.

This sequence belongs to the phenylalanyl-tRNA synthetase beta subunit family. Type 1 subfamily. Tetramer of two alpha and two beta subunits. Mg(2+) is required as a cofactor.

It is found in the cytoplasm. The enzyme catalyses tRNA(Phe) + L-phenylalanine + ATP = L-phenylalanyl-tRNA(Phe) + AMP + diphosphate + H(+). This Streptococcus pneumoniae serotype 4 (strain ATCC BAA-334 / TIGR4) protein is Phenylalanine--tRNA ligase beta subunit.